Here is a 193-residue protein sequence, read N- to C-terminus: PXMP2/4 family protein 2 (193 aa).

The next 4 helical transmembrane spans lie at 56–78 (VATM…YRSL), 96–116 (IDQL…TNFI), 132–152 (LFYA…INFS), and 160–180 (VLYS…ISFD).

The protein belongs to the peroxisomal membrane protein PXMP2/4 family.

The protein localises to the membrane. In Dictyostelium discoideum (Social amoeba), this protein is PXMP2/4 family protein 2.